A 475-amino-acid chain; its full sequence is ATP synthase subunit beta (475 aa).

Gly-152–Thr-159 is a binding site for ATP.

This sequence belongs to the ATPase alpha/beta chains family. F-type ATPases have 2 components, CF(1) - the catalytic core - and CF(0) - the membrane proton channel. CF(1) has five subunits: alpha(3), beta(3), gamma(1), delta(1), epsilon(1). CF(0) has three main subunits: a(1), b(2) and c(9-12). The alpha and beta chains form an alternating ring which encloses part of the gamma chain. CF(1) is attached to CF(0) by a central stalk formed by the gamma and epsilon chains, while a peripheral stalk is formed by the delta and b chains.

The protein localises to the cell inner membrane. It catalyses the reaction ATP + H2O + 4 H(+)(in) = ADP + phosphate + 5 H(+)(out). In terms of biological role, produces ATP from ADP in the presence of a proton gradient across the membrane. The catalytic sites are hosted primarily by the beta subunits. The chain is ATP synthase subunit beta from Wolbachia sp. subsp. Drosophila simulans (strain wRi).